We begin with the raw amino-acid sequence, 728 residues long: Glutamate--cysteine ligase (728 aa).

A disordered region spans residues 517-552 (PVRTTRRGGSASRSASGTSTPNSGSSRPATPPLGPV). Low complexity predominate over residues 523-536 (RGGSASRSASGTST).

The protein belongs to the glutamate--cysteine ligase type 3 family.

It carries out the reaction L-cysteine + L-glutamate + ATP = gamma-L-glutamyl-L-cysteine + ADP + phosphate + H(+). Its pathway is sulfur metabolism; glutathione biosynthesis; glutathione from L-cysteine and L-glutamate: step 1/2. The polypeptide is Glutamate--cysteine ligase (gcs-1) (Neurospora crassa (strain ATCC 24698 / 74-OR23-1A / CBS 708.71 / DSM 1257 / FGSC 987)).